Reading from the N-terminus, the 230-residue chain is Ribose-5-phosphate isomerase A (230 aa).

Residues 28-31 (TGST), 83-86 (DGAD), and 97-100 (KGLG) each bind substrate. The active-site Proton acceptor is glutamate 106. Lysine 124 is a substrate binding site.

The protein belongs to the ribose 5-phosphate isomerase family. In terms of assembly, homodimer.

It catalyses the reaction aldehydo-D-ribose 5-phosphate = D-ribulose 5-phosphate. It participates in carbohydrate degradation; pentose phosphate pathway; D-ribose 5-phosphate from D-ribulose 5-phosphate (non-oxidative stage): step 1/1. In terms of biological role, catalyzes the reversible conversion of ribose-5-phosphate to ribulose 5-phosphate. The chain is Ribose-5-phosphate isomerase A from Gloeobacter violaceus (strain ATCC 29082 / PCC 7421).